Reading from the N-terminus, the 479-residue chain is ATP synthase subunit beta (479 aa).

Residue 168-175 participates in ATP binding; the sequence is GGAGVGKT.

This sequence belongs to the ATPase alpha/beta chains family. As to quaternary structure, F-type ATPases have 2 components, CF(1) - the catalytic core - and CF(0) - the membrane proton channel. CF(1) has five subunits: alpha(3), beta(3), gamma(1), delta(1), epsilon(1). CF(0) has three main subunits: a(1), b(2) and c(9-12). The alpha and beta chains form an alternating ring which encloses part of the gamma chain. CF(1) is attached to CF(0) by a central stalk formed by the gamma and epsilon chains, while a peripheral stalk is formed by the delta and b chains.

The protein localises to the cell membrane. It carries out the reaction ATP + H2O + 4 H(+)(in) = ADP + phosphate + 5 H(+)(out). Produces ATP from ADP in the presence of a proton gradient across the membrane. The catalytic sites are hosted primarily by the beta subunits. The chain is ATP synthase subunit beta from Frankia casuarinae (strain DSM 45818 / CECT 9043 / HFP020203 / CcI3).